The sequence spans 377 residues: MLSSRVRLVATTARLVHSLIYSSSRSFMDLKALLSSLNDFASLSFAESWDNVGLLVEPSPPHTVNTLFLTNDLTEEVMEEALQKKADLILSYHPPIFRPMKRITWKTWKERLVIRALENRVGIYSPHTAYDAAPQGVNNWLAKGLGVCTSRPIHPSKAPDYPTEGTHRVEFSVTHTQDPDKVISALKEIAGVSVTSFSARTDDEEQTRLSLNCTQQALMQVVAFLSQNRQFYQKTEILSLEKPLLLYTGMGRLCTLDESVSLETMIERIKSHLKLSHVRLALGIGKTLESPVKVVALCAGSGSSVLQGTDADLYLTGEMSHHDVLDAASQGISVILCEHSNTERGFLSDLRDMLDAHLENKINIILSETDRDPLHVI.

N6-acetyllysine is present on Lys-109. The tract at residues 244–377 (LLLYTGMGRL…ETDRDPLHVI (134 aa)) is mediates interaction with COPS2. Thr-255 carries the post-translational modification Phosphothreonine. Ser-259 carries the post-translational modification Phosphoserine.

Belongs to the GTP cyclohydrolase I type 2/NIF3 family. Homodimer. Interacts with COPS2. Interacts with THOC7.

The protein localises to the cytoplasm. Its subcellular location is the nucleus. Functionally, may function as a transcriptional corepressor through its interaction with COPS2, negatively regulating the expression of genes involved in neuronal differentiation. This chain is NIF3-like protein 1, found in Bos taurus (Bovine).